We begin with the raw amino-acid sequence, 399 residues long: Methylthioribose kinase (399 aa).

Residues N40, K57, and 111 to 113 (EDL) contribute to the ATP site. A substrate-binding site is contributed by D229. Residue 246–248 (DAE) participates in ATP binding. Position 344 (R344) interacts with substrate.

Belongs to the methylthioribose kinase family. Homodimer.

The catalysed reaction is 5-(methylsulfanyl)-D-ribose + ATP = 5-(methylsulfanyl)-alpha-D-ribose 1-phosphate + ADP + H(+). The protein operates within amino-acid biosynthesis; L-methionine biosynthesis via salvage pathway; S-methyl-5-thio-alpha-D-ribose 1-phosphate from S-methyl-5'-thioadenosine (hydrolase route): step 2/2. In terms of biological role, catalyzes the phosphorylation of methylthioribose into methylthioribose-1-phosphate. The chain is Methylthioribose kinase from Yersinia enterocolitica serotype O:8 / biotype 1B (strain NCTC 13174 / 8081).